The chain runs to 107 residues: ATPase inhibitor, mitochondrial (107 aa).

A mitochondrion-targeting transit peptide spans methionine 1–phenylalanine 25. The interval phenylalanine 25–tyrosine 58 is disordered. Positions glycine 26–lysine 52 are N-terminal inhibitory region. Position 39 is a phosphoserine (serine 39). Residues glycine 48–tyrosine 58 are compositionally biased toward basic and acidic residues. Residues arginine 60–histidine 107 are a coiled coil. Positions histidine 74–glutamate 106 are antiparallel alpha-helical coiled coil region. Residue lysine 103 is modified to N6-succinyllysine.

It belongs to the ATPase inhibitor family. In terms of assembly, homodimer; represents the active form and is present at a pH value below 6.5. Homotetramer; represents the inactive form and is present at a pH value above 7.0.

It is found in the mitochondrion. In terms of biological role, endogenous F(1)F(o)-ATPase inhibitor limiting ATP depletion when the mitochondrial membrane potential falls below a threshold and the F(1)F(o)-ATP synthase starts hydrolyzing ATP to pump protons out of the mitochondrial matrix. Required to avoid the consumption of cellular ATP when the F(1)F(o)-ATP synthase enzyme acts as an ATP hydrolase. Indirectly acts as a regulator of heme synthesis in erythroid tissues: regulates heme synthesis by modulating the mitochondrial pH and redox potential, allowing FECH to efficiently catalyze the incorporation of iron into protoporphyrin IX to produce heme. This chain is ATPase inhibitor, mitochondrial, found in Rattus norvegicus (Rat).